The following is a 352-amino-acid chain: Heat-inducible transcription repressor HrcA (352 aa).

The protein belongs to the HrcA family.

Its function is as follows. Negative regulator of class I heat shock genes (grpE-dnaK-dnaJ and groELS operons). Prevents heat-shock induction of these operons. In Latilactobacillus sakei (Lactobacillus sakei), this protein is Heat-inducible transcription repressor HrcA.